Reading from the N-terminus, the 342-residue chain is Tetraacyldisaccharide 4'-kinase (342 aa).

Residue 68–75 (TVGGTGKT) participates in ATP binding.

This sequence belongs to the LpxK family.

The catalysed reaction is a lipid A disaccharide + ATP = a lipid IVA + ADP + H(+). The protein operates within glycolipid biosynthesis; lipid IV(A) biosynthesis; lipid IV(A) from (3R)-3-hydroxytetradecanoyl-[acyl-carrier-protein] and UDP-N-acetyl-alpha-D-glucosamine: step 6/6. Transfers the gamma-phosphate of ATP to the 4'-position of a tetraacyldisaccharide 1-phosphate intermediate (termed DS-1-P) to form tetraacyldisaccharide 1,4'-bis-phosphate (lipid IVA). This is Tetraacyldisaccharide 4'-kinase from Burkholderia pseudomallei (strain K96243).